Consider the following 966-residue polypeptide: Integrator complex subunit 7 (966 aa).

Phosphoserine is present on residues Ser338 and Ser809. Positions 941 to 966 (LQQQAQQPLQPQPLPQPQPRSAYTRF) are disordered.

It belongs to the Integrator subunit 7 family. In terms of assembly, component of the Integrator complex, composed of core subunits INTS1, INTS2, INTS3, INTS4, INTS5, INTS6, INTS7, INTS8, INTS9/RC74, INTS10, INTS11/CPSF3L, INTS12, INTS13, INTS14 and INTS15. The core complex associates with protein phosphatase 2A subunits PPP2CA and PPP2R1A, to form the Integrator-PP2A (INTAC) complex. Interacts with NABP2.

The protein localises to the nucleus. It localises to the chromosome. It is found in the cytoplasm. Functionally, component of the integrator complex, a multiprotein complex that terminates RNA polymerase II (Pol II) transcription in the promoter-proximal region of genes. The integrator complex provides a quality checkpoint during transcription elongation by driving premature transcription termination of transcripts that are unfavorably configured for transcriptional elongation: the complex terminates transcription by (1) catalyzing dephosphorylation of the C-terminal domain (CTD) of Pol II subunit POLR2A/RPB1 and SUPT5H/SPT5, (2) degrading the exiting nascent RNA transcript via endonuclease activity and (3) promoting the release of Pol II from bound DNA. The integrator complex is also involved in terminating the synthesis of non-coding Pol II transcripts, such as enhancer RNAs (eRNAs), small nuclear RNAs (snRNAs), telomerase RNAs and long non-coding RNAs (lncRNAs). May be not involved in the recruitment of cytoplasmic dynein to the nuclear envelope by different components of the INT complex. Plays a role in DNA damage response (DDR) signaling during the S phase. The protein is Integrator complex subunit 7 (Ints7) of Mus musculus (Mouse).